The chain runs to 57 residues: YLTDHYFKVDLNSTVTQQRFLLDPSELAGITIMQPSDSNIEWLKQYRDDVATWLENS.

Residues 1–57 (YLTDHYFKVDLNSTVTQQRFLLDPSELAGITIMQPSDSNIEWLKQYRDDVATWLENS) lie on the Extracellular side of the membrane. N-linked (GlcNAc...) asparagine glycosylation occurs at N12.

It belongs to the peptidase M1 family. In terms of assembly, homodimer; disulfide-linked. Requires Zn(2+) as cofactor.

It localises to the cell membrane. It catalyses the reaction Release of N-terminal glutamate (and to a lesser extent aspartate) from a peptide.. Inhibited by the aminopeptidase competitive inhibitors amastatin (Leu and acidic inhibitor), and bestatin (Leu inhibitor), by chelating agents EDTA, and 1,10-Phenanthroline, as well as by Zn(2+) ions. Substrate specificity is modulated by Ca(2+), Ba(2+), and Mn(2+) ions which enhances the enzymatic activity for cleavage of acidic residues. Venom protein that cleaves N-terminal acidic residues from peptides with high potency in presence of calcium. It may have several roles in venom including alteration of blood pressure by cleaving circulating angiotensin-2, general degradation of host tissue, increase of permeability to other venom components, and/or processing of other toxins in the venom. This Gloydius blomhoffii (Mamushi) protein is Aminopeptidase A.